Here is a 130-residue protein sequence, read N- to C-terminus: Glycoprotein hormone alpha-2 (130 aa).

An N-terminal signal peptide occupies residues 1 to 22 (MPMAPRVLLFCLLGLAVTEGHG). Disulfide bonds link Cys-32/Cys-90, Cys-49/Cys-104, Cys-58/Cys-120, and Cys-62/Cys-122. 2 N-linked (GlcNAc...) asparagine glycosylation sites follow: Asn-38 and Asn-82.

The protein belongs to the glycoprotein hormones subunit alpha family. In terms of assembly, heterodimer with GPHB5; this heterodimer interacts with thyroid-stimulating hormone receptor (TSHR), and hence stimulates cAMP production.

The protein localises to the secreted. Its function is as follows. Functions as a heterodimeric glycoprotein hormone with GPHB5 able to bind and activate the thyroid-stimulating hormone receptor (TSHR), leading to increased cAMP production. Plays a central role in controlling thyroid cell metabolism. The sequence is that of Glycoprotein hormone alpha-2 (Gpha2) from Rattus norvegicus (Rat).